The primary structure comprises 310 residues: Zinc finger protein 42 homolog (310 aa).

Over residues 1–15 (MSQQLKKRAKTRHQK) the composition is skewed to basic residues. The disordered stretch occupies residues 1–35 (MSQQLKKRAKTRHQKGLGGRAPSGAKPRQGKSSQD). C2H2-type zinc fingers lie at residues 188 to 212 (IACP…LLIH), 217 to 239 (HVCA…FLVH), 245 to 269 (FRCT…VRIH), and 275 to 299 (FVCP…ILTH). Glycyl lysine isopeptide (Lys-Gly) (interchain with G-Cter in ubiquitin) cross-links involve residues K231 and K233.

This sequence belongs to the krueppel C2H2-type zinc-finger protein family. In terms of processing, polyubiquitinated by RNF12, leading to proteasomal degradation. In terms of tissue distribution, expressed in kidney, epidermal keratinocytes, prostate epithelial cells, bronchial and small airway lung epithelial cells (at protein level). Expressed in malignant kidney and several carcinoma cell lines (at protein level). Expressed in embryonic stem cells, kidney, epidermal keratinocytes, prostate epithelial cells, bronchial and small airway lung epithelial cells. Expressed in embryonal carcinomas, seminomas, malignant kidney and several carcinoma cell lines.

Its subcellular location is the nucleus. In terms of biological role, involved in the reprogramming of X-chromosome inactivation during the acquisition of pluripotency. Required for efficient elongation of TSIX, a non-coding RNA antisense to XIST. Binds DXPas34 enhancer within the TSIX promoter. Involved in ES cell self-renewal. In Homo sapiens (Human), this protein is Zinc finger protein 42 homolog (ZFP42).